Here is a 144-residue protein sequence, read N- to C-terminus: Large ribosomal subunit protein uL13 (144 aa).

It belongs to the universal ribosomal protein uL13 family. In terms of assembly, part of the 50S ribosomal subunit.

In terms of biological role, this protein is one of the early assembly proteins of the 50S ribosomal subunit, although it is not seen to bind rRNA by itself. It is important during the early stages of 50S assembly. This is Large ribosomal subunit protein uL13 from Nitrosomonas europaea (strain ATCC 19718 / CIP 103999 / KCTC 2705 / NBRC 14298).